The chain runs to 196 residues: Ribonuclease S-F11 (196 aa).

A disulfide bridge connects residues C16 and C21. N-linked (GlcNAc...) asparagine glycosylation occurs at N28. The active-site Proton donor is H32. Residues H32 and 69–70 contribute to the RNA site; that span reads QL. 3 cysteine pairs are disulfide-bonded: C46–C94, C153–C186, and C169–C180. The active site involves Q87. RNA is bound at residue 90–91; sequence KH. Catalysis depends on H91, which acts as the Proton acceptor.

This sequence belongs to the RNase T2 family. In terms of assembly, monomer.

It localises to the secreted. The protein resides in the extracellular space. The catalysed reaction is a ribonucleotidyl-ribonucleotide-RNA + H2O = a 3'-end 3'-phospho-ribonucleotide-RNA + a 5'-end dephospho-ribonucleoside-RNA + H(+). In terms of biological role, self-incompatibility (SI) is the inherited ability of a flowering plant to prevent self-fertilization by discriminating between self and non-self pollen during pollination. In many species of the Solanaceae, self-incompatibility is controlled by the single, multiallelic locus S. The sequence is that of Ribonuclease S-F11 from Nicotiana alata (Winged tobacco).